A 469-amino-acid chain; its full sequence is MKPVIALIGRPNVGKSTLFNQITKSRDALVADFAGLTRDRKYGDATYQNKSFIVVDTGGIGESECGIDNYMAEQSKTAINEADIIIFVVDARAGLLASDEQIARELRTLGKKIYLVANKVDGVHAEAALVEFYKLGMGEPLQVAASHGRGVQQMLEDVLQDIPEDENPEEHDKDTGLRLAIIGRPNVGKSTLVNRLLGEDRVVAFDQPGTTRDSIYIPFEREGRKYTLIDTAGVRRKGKVDEMIEKFSIVKTLQAMKDAHVVVVVVDAREGIVEQDLHLIGYALEAGRAMVIAINKWDNMSEYDRKQCKLDVERRFDFIPWARIHLISALHGTGVGELYPSIHRAYESANLKVSPAKLTQILNDATDQHQPPTVQGRRIKMRYAHMGGQNPPTIVIHGNKVDKTPADYRRYLENVFRKVYKLEGTPVKIEFKTSENPFEGRKSQVDERTAARRRRYIQKFKKAEKKFKR.

2 consecutive EngA-type G domains span residues 3-166 and 177-350; these read PVIA…PEDE and LRLA…ESAN. GTP is bound by residues 9–16, 56–60, 118–121, 183–190, 230–234, and 295–298; these read GRPNVGKS, DTGGI, NKVD, DTAGV, and NKWD. Residues 351–435 enclose the KH-like domain; sequence LKVSPAKLTQ…PVKIEFKTSE (85 aa).

The protein belongs to the TRAFAC class TrmE-Era-EngA-EngB-Septin-like GTPase superfamily. EngA (Der) GTPase family. Associates with the 50S ribosomal subunit.

GTPase that plays an essential role in the late steps of ribosome biogenesis. This chain is GTPase Der, found in Acinetobacter baumannii (strain AB0057).